Consider the following 399-residue polypeptide: Immunoglobulin heavy constant gamma 1 (399 aa).

Positions 1–21 (ASTKGPSVFPLAPSSKSTSGG) are disordered. The interval 1 to 98 (ASTKGPSVFP…PSNTKVDKKV (98 aa)) is CH1. At 1-350 (ASTKGPSVFP…DGELDGLWTT (350 aa)) the chain is on the extracellular side. Ig-like domains lie at 6–99 (PSVF…KKVE), 121–220 (PSVF…KTIS), and 229–325 (PQVY…KSLS). C27 and C83 are joined by a disulfide. The interval 99 to 110 (EPKSCDKTHTCP) is hinge. The interval 111–223 (PCPAPELLGG…PIEKTISKAK (113 aa)) is CH2. 2 cysteine pairs are disulfide-bonded: C144-C204 and C250-C308. N180 is a glycosylation site (N-linked (GlcNAc...) (complex) asparagine). Residues 224–330 (GQPREPQVYT…QKSLSLSPEL (107 aa)) form a CH3 region. Residues 351 to 371 (ITIFITLFLLSVCYSATVTFF) form a helical membrane-spanning segment. The Cytoplasmic portion of the chain corresponds to 372-399 (KVKWIFSSVVDLKQTIIPDYRNMIGQGA).

Immunoglobulins are composed of two identical heavy chains and two identical light chains; disulfide-linked. Interacts with FCGR1A; this interaction mediates IgG effector functions on monocytes. Interacts with FCGR2A and FCGR3A. In terms of processing, glycosylation on Asn-180 is required for interaction with Fc receptors and ability to activate the complement pathway. Post-translationally, (Microbial infection) Deglycosylation on Asn-180 by S.pyogenes EndoS or Endos2 endoglucosidases prevents interaction between immunoglobulin-gamma (IgG) and Fc receptors, impairing ability to activate the complement pathway.

The protein localises to the secreted. The protein resides in the cell membrane. Its function is as follows. Constant region of immunoglobulin heavy chains. Immunoglobulins, also known as antibodies, are membrane-bound or secreted glycoproteins produced by B lymphocytes. In the recognition phase of humoral immunity, the membrane-bound immunoglobulins serve as receptors which, upon binding of a specific antigen, trigger the clonal expansion and differentiation of B lymphocytes into immunoglobulins-secreting plasma cells. Secreted immunoglobulins mediate the effector phase of humoral immunity, which results in the elimination of bound antigens. The antigen binding site is formed by the variable domain of one heavy chain, together with that of its associated light chain. Thus, each immunoglobulin has two antigen binding sites with remarkable affinity for a particular antigen. The variable domains are assembled by a process called V-(D)-J rearrangement and can then be subjected to somatic hypermutations which, after exposure to antigen and selection, allow affinity maturation for a particular antigen. Mediates IgG effector functions on monocytes triggering ADCC of virus-infected cells. This Homo sapiens (Human) protein is Immunoglobulin heavy constant gamma 1.